The chain runs to 343 residues: Peptide methionine sulfoxide reductase msrA/msrB (343 aa).

A peptide methionine sulfoxide reductase A region spans residues 21–174; it reads KVIYLAGGCF…PNGYCHIDLK (154 aa). The Cysteine sulfenic acid (-SOH) intermediate role is filled by Cys-29. The MsrB domain occupies 191-314; that stretch reads DEVLKKKLTQ…NSASLRFIPL (124 aa). The active-site Nucleophile is Cys-303.

This sequence in the N-terminal section; belongs to the MsrA Met sulfoxide reductase family. The protein in the C-terminal section; belongs to the MsrB Met sulfoxide reductase family.

The catalysed reaction is L-methionyl-[protein] + [thioredoxin]-disulfide + H2O = L-methionyl-(S)-S-oxide-[protein] + [thioredoxin]-dithiol. It carries out the reaction [thioredoxin]-disulfide + L-methionine + H2O = L-methionine (S)-S-oxide + [thioredoxin]-dithiol. It catalyses the reaction L-methionyl-[protein] + [thioredoxin]-disulfide + H2O = L-methionyl-(R)-S-oxide-[protein] + [thioredoxin]-dithiol. Its function is as follows. Has an important function as a repair enzyme for proteins that have been inactivated by oxidation. Catalyzes the reversible oxidation-reduction of methionine sulfoxide in proteins to methionine. This chain is Peptide methionine sulfoxide reductase msrA/msrB, found in Enterococcus faecalis (Streptococcus faecalis).